A 559-amino-acid polypeptide reads, in one-letter code: Glypican-1 (559 aa).

An N-terminal signal peptide occupies residues 1-23 (MELRARGWWLLYAAAVLVACARG). 7 disulfides stabilise this stretch: Cys32/Cys68, Cys62/Cys256, Cys69/Cys259, Cys191/Cys343, Cys246/Cys279, Cys268/Cys415, and Cys272/Cys401. 2 N-linked (GlcNAc...) asparagine glycosylation sites follow: Asn79 and Asn116. A disordered region spans residues 478-539 (FQDASDDGSG…SAAAPTPPQA (62 aa)). O-linked (Xyl...) (heparan sulfate) serine glycosylation is found at Ser486, Ser488, and Ser490. The GPI-anchor amidated serine moiety is linked to residue Ser530. The propeptide at 531–559 (AAAPTPPQASPLLLLGLALALPAVAPRGR) is removed in mature form.

It belongs to the glypican family. In terms of processing, S-nitrosylated in a Cu(2+)-dependent manner. Nitric acid (NO) is released from the nitrosylated cysteines by ascorbate or by some other reducing agent, in a Cu(2+) or Zn(2+) dependent manner. This free nitric oxide is then capable of cleaving the heparan sulfate side chains. N- and O-glycosylated. N-glycosylation is mainly of the complex type containing sialic acid. O-glycosylated with heparan sulfate. The heparan sulfate chains can be cleaved either by the action of heparanase or, degraded by a deaminative process that uses nitric oxide (NO) released from the S-nitrosylated cysteines. This process is triggered by ascorbate, or by some other reducing agent, in a Cu(2+)- or Zn(2+) dependent manner. Cu(2+) ions are provided by ceruloproteins such as APP, PRNP or CP which associate with GCP1 in intracellular compartments or lipid rafts. Post-translationally, shed from the cell surface probably by further cleavage.

The protein resides in the cell membrane. The protein localises to the endosome. It is found in the secreted. Its subcellular location is the extracellular space. Functionally, cell surface proteoglycan that bears heparan sulfate. Binds, via the heparan sulfate side chains, alpha-4 (V) collagen and participates in Schwann cell myelination. May act as a catalyst in increasing the rate of conversion of prion protein PRPN (C) to PRNP (Sc) via associating (via the heparan sulfate side chains) with both forms of PRPN, targeting them to lipid rafts and facilitating their interaction. Required for proper skeletal muscle differentiation by sequestering FGF2 in lipid rafts preventing its binding to receptors (FGFRs) and inhibiting the FGF-mediated signaling. The chain is Glypican-1 (GPC1) from Bos taurus (Bovine).